Here is a 284-residue protein sequence, read N- to C-terminus: Bifunctional protein FolD 2 (284 aa).

NADP(+) contacts are provided by residues 164-166, S189, and I230; that span reads GRG.

The protein belongs to the tetrahydrofolate dehydrogenase/cyclohydrolase family. As to quaternary structure, homodimer.

It carries out the reaction (6R)-5,10-methylene-5,6,7,8-tetrahydrofolate + NADP(+) = (6R)-5,10-methenyltetrahydrofolate + NADPH. The catalysed reaction is (6R)-5,10-methenyltetrahydrofolate + H2O = (6R)-10-formyltetrahydrofolate + H(+). The protein operates within one-carbon metabolism; tetrahydrofolate interconversion. Catalyzes the oxidation of 5,10-methylenetetrahydrofolate to 5,10-methenyltetrahydrofolate and then the hydrolysis of 5,10-methenyltetrahydrofolate to 10-formyltetrahydrofolate. The polypeptide is Bifunctional protein FolD 2 (Desulfitobacterium hafniense (strain Y51)).